Consider the following 363-residue polypeptide: Small ribosomal subunit biogenesis GTPase RsgA (363 aa).

Residues 112 to 268 (HQQVIAANID…LIDTPGMREL (157 aa)) enclose the CP-type G domain. Residues 157–160 (TKAD) and 210–218 (GSSGAGKST) contribute to the GTP site. Residues Cys-291, Cys-296, His-298, and Cys-304 each coordinate Zn(2+). Residues 340 to 363 (RVAQNNRGKGSGKRPASIDRPGRR) are disordered.

This sequence belongs to the TRAFAC class YlqF/YawG GTPase family. RsgA subfamily. In terms of assembly, monomer. Associates with 30S ribosomal subunit, binds 16S rRNA. It depends on Zn(2+) as a cofactor.

Its subcellular location is the cytoplasm. In terms of biological role, one of several proteins that assist in the late maturation steps of the functional core of the 30S ribosomal subunit. Helps release RbfA from mature subunits. May play a role in the assembly of ribosomal proteins into the subunit. Circularly permuted GTPase that catalyzes slow GTP hydrolysis, GTPase activity is stimulated by the 30S ribosomal subunit. The sequence is that of Small ribosomal subunit biogenesis GTPase RsgA from Xanthomonas oryzae pv. oryzae (strain PXO99A).